A 76-amino-acid polypeptide reads, in one-letter code: MMEVIKAIEFKYYSDVVELIYDFKEMVNFCIDKAMELGITSYAKLRKAIYNEWKEKWYPKYHTHYCHSACRVATSI.

This sequence to M.jannaschii MJ0857 N-terminal region.

This is an uncharacterized protein from Methanocaldococcus jannaschii (strain ATCC 43067 / DSM 2661 / JAL-1 / JCM 10045 / NBRC 100440) (Methanococcus jannaschii).